Here is a 234-residue protein sequence, read N- to C-terminus: Large ribosomal subunit protein uL1 (234 aa).

This sequence belongs to the universal ribosomal protein uL1 family. In terms of assembly, part of the 50S ribosomal subunit.

In terms of biological role, binds directly to 23S rRNA. The L1 stalk is quite mobile in the ribosome, and is involved in E site tRNA release. Functionally, protein L1 is also a translational repressor protein, it controls the translation of the L11 operon by binding to its mRNA. The chain is Large ribosomal subunit protein uL1 from Pectobacterium atrosepticum (strain SCRI 1043 / ATCC BAA-672) (Erwinia carotovora subsp. atroseptica).